Consider the following 422-residue polypeptide: Signal recognition particle receptor FtsY (422 aa).

The disordered stretch occupies residues Pro39–Arg86. Polar residues predominate over residues Tyr50–Pro66. Residues Gly230–Thr237, Asp312–Arg316, and Thr374–Asp377 each bind GTP.

It belongs to the GTP-binding SRP family. FtsY subfamily. As to quaternary structure, part of the signal recognition particle protein translocation system, which is composed of SRP and FtsY.

The protein resides in the cell membrane. Its subcellular location is the cytoplasm. It carries out the reaction GTP + H2O = GDP + phosphate + H(+). In terms of biological role, involved in targeting and insertion of nascent membrane proteins into the cytoplasmic membrane. Acts as a receptor for the complex formed by the signal recognition particle (SRP) and the ribosome-nascent chain (RNC). This Mycobacterium bovis (strain ATCC BAA-935 / AF2122/97) protein is Signal recognition particle receptor FtsY.